The primary structure comprises 298 residues: Olfactory receptor 52Z1P (298 aa).

Residues 1–14 (MGIPGLEGLHTWIS) lie on the Extracellular side of the membrane. Residues 15–35 (IPFSFMYIVAVAGNIFLIFLI) traverse the membrane as a helical segment. The Cytoplasmic portion of the chain corresponds to 36–43 (MTERSLHE). The helical transmembrane segment at 44–64 (PMYLFLSMLASADFLLATAAA) threads the bilayer. Topologically, residues 65–85 (PKVLAILWFHSMDISFGSCVS) are extracellular. Cysteine 83 and cysteine 164 are oxidised to a cystine. A helical membrane pass occupies residues 86–106 (QMFFIHFIFVAESAILLAMAF). Residues 107–128 (DRYVAICYPLRYTILTSSAVRK) are Cytoplasmic-facing. The helical transmembrane segment at 129 to 149 (IGIAAVVRSFFICCPFIFLVY) threads the bilayer. Over 150–178 (RLTYCGRNIIPHSYCEHIARLACGNINVN) the chain is Extracellular. The chain crosses the membrane as a helical span at residues 179 to 199 (IIYGLTVALLSTGLDIVLIII). The Cytoplasmic segment spans residues 200–223 (SYTMILHSVFQISSWAARFKALST). Residues 224 to 244 (CGSHICVIFMFYTPAFFSFLA) form a helical membrane-spanning segment. The Extracellular segment spans residues 245–257 (HRFGGKTIPHHIH). Residues 258–278 (ILVGSLYVLVPPMLNPIIYGV) traverse the membrane as a helical segment. Residues 279-298 (KTKQIKDRVILLFSPISVCC) are Cytoplasmic-facing.

It belongs to the G-protein coupled receptor 1 family.

It is found in the cell membrane. In terms of biological role, odorant receptor. The chain is Olfactory receptor 52Z1P from Homo sapiens (Human).